The sequence spans 766 residues: BMP/retinoic acid-inducible neural-specific protein 3 (766 aa).

The first 33 residues, 1-33 (MIWRRRAGAELSSLMALWEWIVLSLHCWVLAVA), serve as a signal peptide directing secretion. The MACPF domain occupies 74 to 264 (RYKIYREFGR…FVQAALSYIA (191 aa)). Residues Asn-168, Asn-337, Asn-456, Asn-562, Asn-609, and Asn-641 are each glycosylated (N-linked (GlcNAc...) asparagine).

This sequence belongs to the BRINP family. As to expression, expressed in olfactory bulb, cerebellum and neuronal layers in hippocampus.

It is found in the secreted. The protein localises to the mitochondrion. In terms of biological role, inhibits neuronal cell proliferation by negative regulation of the cell cycle transition. Promotes pituitary gonadotrope cell proliferation, migration and invasion, when overexpressed. May play a role in cell pituitary tumor development. The protein is BMP/retinoic acid-inducible neural-specific protein 3 (Brinp3) of Rattus norvegicus (Rat).